A 334-amino-acid polypeptide reads, in one-letter code: Glyceraldehyde-3-phosphate dehydrogenase (334 aa).

Residues 12-13 (RI), Asp35, Arg79, and Ser121 contribute to the NAD(+) site. Residues 152–154 (SCT), Thr183, Arg198, 211–212 (TG), and Arg234 each bind D-glyceraldehyde 3-phosphate. Catalysis depends on Cys153, which acts as the Nucleophile. Asn315 provides a ligand contact to NAD(+).

This sequence belongs to the glyceraldehyde-3-phosphate dehydrogenase family. As to quaternary structure, homotetramer.

It is found in the cytoplasm. The enzyme catalyses D-glyceraldehyde 3-phosphate + phosphate + NAD(+) = (2R)-3-phospho-glyceroyl phosphate + NADH + H(+). It participates in carbohydrate degradation; glycolysis; pyruvate from D-glyceraldehyde 3-phosphate: step 1/5. Functionally, catalyzes the oxidative phosphorylation of glyceraldehyde 3-phosphate (G3P) to 1,3-bisphosphoglycerate (BPG) using the cofactor NAD. The first reaction step involves the formation of a hemiacetal intermediate between G3P and a cysteine residue, and this hemiacetal intermediate is then oxidized to a thioester, with concomitant reduction of NAD to NADH. The reduced NADH is then exchanged with the second NAD, and the thioester is attacked by a nucleophilic inorganic phosphate to produce BPG. In Corynebacterium glutamicum (strain ATCC 13032 / DSM 20300 / JCM 1318 / BCRC 11384 / CCUG 27702 / LMG 3730 / NBRC 12168 / NCIMB 10025 / NRRL B-2784 / 534), this protein is Glyceraldehyde-3-phosphate dehydrogenase (gap).